Here is a 223-residue protein sequence, read N- to C-terminus: Deoxyribose-phosphate aldolase (223 aa).

Residue Asp-92 is the Proton donor/acceptor of the active site. Catalysis depends on Lys-158, which acts as the Schiff-base intermediate with acetaldehyde. Lys-188 (proton donor/acceptor) is an active-site residue.

Belongs to the DeoC/FbaB aldolase family. DeoC type 1 subfamily.

It localises to the cytoplasm. It catalyses the reaction 2-deoxy-D-ribose 5-phosphate = D-glyceraldehyde 3-phosphate + acetaldehyde. It functions in the pathway carbohydrate degradation; 2-deoxy-D-ribose 1-phosphate degradation; D-glyceraldehyde 3-phosphate and acetaldehyde from 2-deoxy-alpha-D-ribose 1-phosphate: step 2/2. In terms of biological role, catalyzes a reversible aldol reaction between acetaldehyde and D-glyceraldehyde 3-phosphate to generate 2-deoxy-D-ribose 5-phosphate. This Mycobacterium avium (strain 104) protein is Deoxyribose-phosphate aldolase.